The sequence spans 301 residues: Ras-related GTP-binding protein A (301 aa).

GTP-binding positions include 9–16 (GRSESGKT), 57–61 (DCGGQ), and 122–125 (HKMD).

Belongs to the GTR/RAG GTP-binding protein family.

Its subcellular location is the cytoplasm. It localises to the nucleus. It is found in the lysosome. Its function is as follows. Guanine nucleotide-binding protein that plays a crucial role in the cellular response to amino acid availability through regulation of the TOR signaling cascade. The protein is Ras-related GTP-binding protein A (ragA) of Dictyostelium discoideum (Social amoeba).